We begin with the raw amino-acid sequence, 1502 residues long: tRNA (32-2'-O)-methyltransferase regulator trm732 (1502 aa).

The protein belongs to the THADA family.

It localises to the cytoplasm. The protein resides in the nucleus. Its function is as follows. Together with methyltransferase trm7, methylates the 2'-O-ribose of nucleotides at position 32 of the anticodon loop of substrate tRNAs. In Schizosaccharomyces pombe (strain 972 / ATCC 24843) (Fission yeast), this protein is tRNA (32-2'-O)-methyltransferase regulator trm732.